Here is a 118-residue protein sequence, read N- to C-terminus: Small ribosomal subunit protein uS13 (118 aa).

The tract at residues 94–118 (GLPVRGQRTRTNARTRKGPRKAIKK) is disordered.

The protein belongs to the universal ribosomal protein uS13 family. In terms of assembly, part of the 30S ribosomal subunit. Forms a loose heterodimer with protein S19. Forms two bridges to the 50S subunit in the 70S ribosome.

Its function is as follows. Located at the top of the head of the 30S subunit, it contacts several helices of the 16S rRNA. In the 70S ribosome it contacts the 23S rRNA (bridge B1a) and protein L5 of the 50S subunit (bridge B1b), connecting the 2 subunits; these bridges are implicated in subunit movement. Contacts the tRNAs in the A and P-sites. This chain is Small ribosomal subunit protein uS13, found in Thiobacillus denitrificans (strain ATCC 25259 / T1).